A 390-amino-acid polypeptide reads, in one-letter code: Dynein regulatory complex subunit 5 (390 aa).

LRR repeat units follow at residues 182 to 205 (TETL…MLAS), 210 to 233 (NLSI…ALAK), and 238 to 261 (HSVI…SLAR).

Belongs to the DRC5 family. In terms of assembly, component of the nexin-dynein regulatory complex (N-DRC). Interacts with DRC1, DRC2, DRC3, DRC4, DRC7 and DRC11.

The protein resides in the cell projection. It is found in the cilium. It localises to the flagellum. The protein localises to the cytoplasm. Its subcellular location is the cytoskeleton. The protein resides in the flagellum axoneme. Functionally, component of the nexin-dynein regulatory complex (N-DRC) a key regulator of ciliary/flagellar motility which maintains the alignment and integrity of the distal axoneme and regulates microtubule sliding in motile axonemes. May play a role in the assembly of N-DRC. This chain is Dynein regulatory complex subunit 5, found in Chlamydomonas reinhardtii (Chlamydomonas smithii).